An 81-amino-acid polypeptide reads, in one-letter code: Photosystem I iron-sulfur center (81 aa).

4Fe-4S ferredoxin-type domains lie at 2–31 (SHTV…MVPW) and 39–68 (IASA…VRVY). The [4Fe-4S] cluster site is built by Cys-11, Cys-14, Cys-17, Cys-21, Cys-48, Cys-51, Cys-54, and Cys-58.

The eukaryotic PSI reaction center is composed of at least 11 subunits. Requires [4Fe-4S] cluster as cofactor.

Its subcellular location is the plastid. It localises to the chloroplast thylakoid membrane. The catalysed reaction is reduced [plastocyanin] + hnu + oxidized [2Fe-2S]-[ferredoxin] = oxidized [plastocyanin] + reduced [2Fe-2S]-[ferredoxin]. Apoprotein for the two 4Fe-4S centers FA and FB of photosystem I (PSI); essential for photochemical activity. FB is the terminal electron acceptor of PSI, donating electrons to ferredoxin. The C-terminus interacts with PsaA/B/D and helps assemble the protein into the PSI complex. Required for binding of PsaD and PsaE to PSI. PSI is a plastocyanin/cytochrome c6-ferredoxin oxidoreductase, converting photonic excitation into a charge separation, which transfers an electron from the donor P700 chlorophyll pair to the spectroscopically characterized acceptors A0, A1, FX, FA and FB in turn. The polypeptide is Photosystem I iron-sulfur center (Chlorella vulgaris (Green alga)).